A 329-amino-acid polypeptide reads, in one-letter code: MVNILKKLANGVSLNIDEAYLLSREILSGGLNDVAVAAALTAMRCRGETAEEVTGFVKSAREVAVKVPLRVEAIDTAGTGGDGAGTINLSTLAAVVAAAAGARVLKHGNRSASGFFGSADFMEAVGYNLEVGPEKAAEMVEKIGFAFVFAPRYHPAFAKVAPVRRQLPFRTVFNIVGPLANPGLVKRQLIGVSERRLLDVVGGVASVLLDRALVVYGSGVDEVSTEGPTEVVEVRGGRAERYVLEPEDFGIGKTPLPRASTREEAVGLALAGLRGEHREAEIAIAVNAAAALYVAEVVRDFRDGFELAVKTIREGAAYRKLREAVEASR.

Residues G78, 81–82 (GD), T86, 88–91 (NLST), 106–114 (KHGNRSASG), and S118 contribute to the 5-phospho-alpha-D-ribose 1-diphosphate site. An anthranilate-binding site is contributed by G78. Residue S90 coordinates Mg(2+). N109 contributes to the anthranilate binding site. An anthranilate-binding site is contributed by R164. Residues D221 and E222 each coordinate Mg(2+).

It belongs to the anthranilate phosphoribosyltransferase family. Homodimer. Requires Mg(2+) as cofactor.

The catalysed reaction is N-(5-phospho-beta-D-ribosyl)anthranilate + diphosphate = 5-phospho-alpha-D-ribose 1-diphosphate + anthranilate. Its pathway is amino-acid biosynthesis; L-tryptophan biosynthesis; L-tryptophan from chorismate: step 2/5. In terms of biological role, catalyzes the transfer of the phosphoribosyl group of 5-phosphorylribose-1-pyrophosphate (PRPP) to anthranilate to yield N-(5'-phosphoribosyl)-anthranilate (PRA). This chain is Anthranilate phosphoribosyltransferase, found in Pyrobaculum islandicum (strain DSM 4184 / JCM 9189 / GEO3).